We begin with the raw amino-acid sequence, 603 residues long: Elongation factor 4 (603 aa).

The 183-residue stretch at 7–189 folds into the tr-type G domain; sequence SRIRNFSIIA…SIVHLVPPPQ (183 aa). GTP-binding positions include 19–24 and 136–139; these read DHGKST and NKID.

The protein belongs to the TRAFAC class translation factor GTPase superfamily. Classic translation factor GTPase family. LepA subfamily.

Its subcellular location is the cell inner membrane. The enzyme catalyses GTP + H2O = GDP + phosphate + H(+). Functionally, required for accurate and efficient protein synthesis under certain stress conditions. May act as a fidelity factor of the translation reaction, by catalyzing a one-codon backward translocation of tRNAs on improperly translocated ribosomes. Back-translocation proceeds from a post-translocation (POST) complex to a pre-translocation (PRE) complex, thus giving elongation factor G a second chance to translocate the tRNAs correctly. Binds to ribosomes in a GTP-dependent manner. The sequence is that of Elongation factor 4 from Rippkaea orientalis (strain PCC 8801 / RF-1) (Cyanothece sp. (strain PCC 8801)).